The chain runs to 478 residues: Cysteine--tRNA ligase (478 aa).

Cysteine 27 provides a ligand contact to Zn(2+). The short motif at 29–39 is the 'HIGH' region element; sequence PTTYNFIHLGN. Positions 207, 232, and 236 each coordinate Zn(2+). A 'KMSKS' region motif is present at residues 264–268; sequence KMSKS. Lysine 267 serves as a coordination point for ATP.

It belongs to the class-I aminoacyl-tRNA synthetase family. Monomer. Requires Zn(2+) as cofactor.

The protein localises to the cytoplasm. It carries out the reaction tRNA(Cys) + L-cysteine + ATP = L-cysteinyl-tRNA(Cys) + AMP + diphosphate. The protein is Cysteine--tRNA ligase of Desulforudis audaxviator (strain MP104C).